Reading from the N-terminus, the 159-residue chain is Protein HydD (159 aa).

This sequence belongs to the peptidase A31 family.

The protein is Protein HydD (hydD) of Wolinella succinogenes (strain ATCC 29543 / DSM 1740 / CCUG 13145 / JCM 31913 / LMG 7466 / NCTC 11488 / FDC 602W) (Vibrio succinogenes).